A 565-amino-acid chain; its full sequence is Sulfite reductase [NADPH] hemoprotein beta-component (565 aa).

[4Fe-4S] cluster is bound by residues cysteine 429, cysteine 435, cysteine 474, and cysteine 478. Cysteine 478 lines the siroheme pocket.

It belongs to the nitrite and sulfite reductase 4Fe-4S domain family. As to quaternary structure, alpha(8)-beta(8). The alpha component is a flavoprotein, the beta component is a hemoprotein. Siroheme is required as a cofactor. It depends on [4Fe-4S] cluster as a cofactor.

It catalyses the reaction hydrogen sulfide + 3 NADP(+) + 3 H2O = sulfite + 3 NADPH + 4 H(+). Its pathway is sulfur metabolism; hydrogen sulfide biosynthesis; hydrogen sulfide from sulfite (NADPH route): step 1/1. Functionally, component of the sulfite reductase complex that catalyzes the 6-electron reduction of sulfite to sulfide. This is one of several activities required for the biosynthesis of L-cysteine from sulfate. The protein is Sulfite reductase [NADPH] hemoprotein beta-component of Shewanella sp. (strain MR-7).